The sequence spans 642 residues: Threonine--tRNA ligase (642 aa).

A TGS domain is found at Met1–Thr61. The interval Asp243–Pro534 is catalytic. Residues Cys334, His385, and His511 each contribute to the Zn(2+) site.

Belongs to the class-II aminoacyl-tRNA synthetase family. In terms of assembly, homodimer. Zn(2+) is required as a cofactor.

The protein localises to the cytoplasm. It catalyses the reaction tRNA(Thr) + L-threonine + ATP = L-threonyl-tRNA(Thr) + AMP + diphosphate + H(+). Its function is as follows. Catalyzes the attachment of threonine to tRNA(Thr) in a two-step reaction: L-threonine is first activated by ATP to form Thr-AMP and then transferred to the acceptor end of tRNA(Thr). Also edits incorrectly charged L-seryl-tRNA(Thr). This Shewanella halifaxensis (strain HAW-EB4) protein is Threonine--tRNA ligase.